The chain runs to 80 residues: DNA-binding protein S1FA2 (80 aa).

Residues 54–59 (PPRKKK) carry the Nuclear localization signal motif. A compositionally biased stretch (basic residues) spans 55 to 70 (PRKKKPVSKKKMKREK). The tract at residues 55–80 (PRKKKPVSKKKMKREKLKQGVSAPGE) is disordered.

The protein belongs to the S1FA transcription factor family.

Its subcellular location is the nucleus. DNA-binding protein that specifically recognizes a negative element (S1F) within the RPS1 promoter. This Oryza sativa subsp. japonica (Rice) protein is DNA-binding protein S1FA2 (S1FA2).